The primary structure comprises 784 residues: SWI/SNF complex subunit SWI3C homolog (784 aa).

Residues 1 to 10 (MPRKASSTSD) show a composition bias toward polar residues. Positions 1–68 (MPRKASSTSD…PEDADDETLA (68 aa)) are disordered. The span at 24–39 (ASPSPSNRSSAAAAAA) shows a compositional bias: low complexity. A compositionally biased stretch (acidic residues) spans 43–66 (DDSDSAAVNEDDDSAVPEDADDET). The SWIRM domain maps to 185–284 (HVVPKHSDWF…YLASGSVHRG (100 aa)). The ZZ-type; degenerate zinc-finger motif lies at 355–409 (LSESSCSYCLQPLTSLHYQSLKEADIALCSDCFHDARYITGHSSLDFQRIDGDND). Zn(2+) contacts are provided by C360, C363, C383, and C386. The SANT domain occupies 413-464 (NDGDSWTDQETLLLLEGIEKYNDNWNNIAEHVGTKSKAQCIYHFIRLPVEDG). 2 disordered regions span residues 667 to 702 (LASP…SMPQ) and 760 to 784 (GMPN…SSVG). Residues 675–695 (PGGSTSTMSSNPMSMSPRPMG) are compositionally biased toward low complexity.

In terms of assembly, interacts with LFR. Interacts with NMCP1.

The protein resides in the nucleus. It localises to the nucleoplasm. Component of a multiprotein complex equivalent of the SWI/SNF complex, an ATP-dependent chromatin-remodeling complex, which is required for the positive and negative regulation of gene expression of a large number of genes. It changes chromatin structure by altering DNA-histone contacts within a nucleosome, leading eventually to a change in nucleosome position, thus facilitating or repressing binding of gene-specific transcription factors. May be involved in positive response to drought stress and modulation of root growth through its interaction with NMCP1. The polypeptide is SWI/SNF complex subunit SWI3C homolog (Oryza sativa subsp. japonica (Rice)).